A 189-amino-acid chain; its full sequence is Glycerol-3-phosphate acyltransferase (189 aa).

Transmembrane regions (helical) follow at residues 1–21 (MVWLLAILAYLLGSLSFAVLL), 50–70 (KLAILTLLGDVGKGLLPVLVA), 72–92 (WLGLGVMEEAWVGIAAVIGHL), 111–131 (MLLGLYPPAVLLAAAAWLLTF), and 151–171 (LLAWQQPGALLPMTVLTGLIV).

The protein belongs to the PlsY family. Probably interacts with PlsX.

The protein resides in the cell inner membrane. The catalysed reaction is an acyl phosphate + sn-glycerol 3-phosphate = a 1-acyl-sn-glycero-3-phosphate + phosphate. The protein operates within lipid metabolism; phospholipid metabolism. Functionally, catalyzes the transfer of an acyl group from acyl-phosphate (acyl-PO(4)) to glycerol-3-phosphate (G3P) to form lysophosphatidic acid (LPA). This enzyme utilizes acyl-phosphate as fatty acyl donor, but not acyl-CoA or acyl-ACP. The polypeptide is Glycerol-3-phosphate acyltransferase (Pseudomonas aeruginosa (strain LESB58)).